The chain runs to 202 residues: Securin (202 aa).

Ala2 carries the N-acetylalanine modification. Positions 35–94 are disordered; that stretch reads LDGRSQVSTPRFGKTFDAPPALPKATRKALGTVNRATEKSVKTKGPLKQKQPSFSAKKMT. The D-box signature appears at 61-64; sequence RKAL. 2 consecutive short sequence motifs (TEK-box) follow at residues 71–73 and 94–96; these read TEK. Positions 163 to 173 match the SH3-binding motif; it reads PPSPVRMPSPP. Ser165 is subject to Phosphoserine; by CDK1.

The protein belongs to the securin family. In terms of assembly, interacts with RPS10 and DNAJA1. Interacts with the caspase-like ESPL1, and prevents its protease activity probably by covering its active site. Interacts with TP53 and blocks its activity probably by blocking its binding to DNA. Interacts with the Ku 70 kDa subunit of ds-DNA kinase. Interacts with PTTG1IP. In terms of processing, phosphorylated at Ser-165 by CDK1 during mitosis. Phosphorylated in vitro by ds-DNA kinase. Post-translationally, ubiquitinated through 'Lys-11' linkage of ubiquitin moieties by the anaphase promoting complex (APC) at the onset of anaphase, conducting to its degradation. 'Lys-11'-linked ubiquitination is mediated by the E2 ligase UBE2C/UBCH10.

The protein localises to the cytoplasm. The protein resides in the nucleus. Regulatory protein, which plays a central role in chromosome stability, in the p53/TP53 pathway, and DNA repair. Probably acts by blocking the action of key proteins. During the mitosis, it blocks Separase/ESPL1 function, preventing the proteolysis of the cohesin complex and the subsequent segregation of the chromosomes. At the onset of anaphase, it is ubiquitinated, conducting to its destruction and to the liberation of ESPL1. Its function is however not limited to a blocking activity, since it is required to activate ESPL1. Negatively regulates the transcriptional activity and related apoptosis activity of TP53. The negative regulation of TP53 may explain the strong transforming capability of the protein when it is overexpressed. May also play a role in DNA repair via its interaction with Ku, possibly by connecting DNA damage-response pathways with sister chromatid separation. The chain is Securin (PTTG1) from Gorilla gorilla gorilla (Western lowland gorilla).